Here is a 315-residue protein sequence, read N- to C-terminus: Putative purine nucleoside phosphorylase (315 aa).

Residues Ser-49, His-81, 103 to 105 (RYH), and Ala-135 each bind phosphate. Glu-220 lines the a purine D-ribonucleoside pocket. Residue Ser-239 coordinates phosphate. Asn-262 serves as a coordination point for a purine D-ribonucleoside.

It belongs to the PNP/MTAP phosphorylase family.

It localises to the cytoplasm. The protein localises to the nucleus. The catalysed reaction is a purine D-ribonucleoside + phosphate = a purine nucleobase + alpha-D-ribose 1-phosphate. It participates in purine metabolism; purine nucleoside salvage. Functionally, the purine nucleoside phosphorylases catalyze the phosphorolytic breakdown of the N-glycosidic bond in the beta-(deoxy)ribonucleoside molecules, with the formation of the corresponding free purine bases and pentose-1-phosphate. Cleaves guanosine and inosine. In Schizosaccharomyces pombe (strain 972 / ATCC 24843) (Fission yeast), this protein is Putative purine nucleoside phosphorylase.